Here is a 349-residue protein sequence, read N- to C-terminus: Ferredoxin--NADP reductase 1 (349 aa).

FAD-binding residues include E36, K44, Y48, V88, L123, D290, and S331.

It belongs to the ferredoxin--NADP reductase type 2 family. Homodimer. FAD is required as a cofactor.

It carries out the reaction 2 reduced [2Fe-2S]-[ferredoxin] + NADP(+) + H(+) = 2 oxidized [2Fe-2S]-[ferredoxin] + NADPH. The protein is Ferredoxin--NADP reductase 1 of Bacillus licheniformis (strain ATCC 14580 / DSM 13 / JCM 2505 / CCUG 7422 / NBRC 12200 / NCIMB 9375 / NCTC 10341 / NRRL NRS-1264 / Gibson 46).